Consider the following 469-residue polypeptide: Diacetylchitobiose binding protein NgcE (469 aa).

Residues 1–37 (MTIRAGSLDRRTLLRGAIATAAMGSFAVACSSPSSED) constitute a signal peptide (tat-type signal). Residues 30-54 (CSSPSSEDKESDSGPKGEKSANNPF) form a disordered region. Residues 35-48 (SEDKESDSGPKGEK) show a composition bias toward basic and acidic residues.

It belongs to the bacterial solute-binding protein 1 family. As to quaternary structure, the complex is composed of two ATP-binding proteins (MsiK), two transmembrane proteins (NgcF and NgcG) and a solute-binding protein (NgcE). Predicted to be exported by the Tat system. The position of the signal peptide cleavage has not been experimentally proven.

It is found in the cell membrane. Functionally, part of the ABC transporter complex NgcEFG-MsiK involved in N,N'-diacetylchitobiose ((GlcNAc)2) uptake. Binds (GlcNAc)2. Can also bind GlcNAc. In Streptomyces coelicolor (strain ATCC BAA-471 / A3(2) / M145), this protein is Diacetylchitobiose binding protein NgcE.